A 126-amino-acid chain; its full sequence is Scygonadin (126 aa).

An N-terminal signal peptide occupies residues 1 to 24 (MRSSLLLGLTVVVLLGVIVPPCMA).

As to expression, expressed in the ejaculatory ducts of mature males. Not detected in the ejaculatory ducts of immature males. Not detected in hepatopancreas, female reproductive tract, eyes, exoskeleton, subcuticular epithelia, heart, gills, stomach, muscle and hemocytes.

The protein resides in the secreted. Functionally, has antibacterial activity against the Gram-positive bacterium M.luteus with an IC(90) of 125ug/ml. Has weak antibacterial activity against the Gram-negative bacterium A.hydrophila. In Scylla serrata (Mud crab), this protein is Scygonadin.